The sequence spans 242 residues: MKILIPTAKEMNTDFPSIEAIPLKPESQAVLDALALYSASQLESFYKVSAEKAAEEFQNIQALKRQTAQHYPALKLFDGLMYRNIKRDKLTEAEQDYLENHVFITSALYGVVPVLSPMAPHRLDFLMKLKVAGKTLKSHWKAAYDETLKKEEVIFSLLSSEFETVFSKEIRAKMVTFKFMEDRGGQLKIHSTISKKARGAFLTALIENQVQTVGEARRLNFAGFVYREDLSQPQGLVFVKEV.

It belongs to the UPF0246 family.

The protein is UPF0246 protein SP_1547 of Streptococcus pneumoniae serotype 4 (strain ATCC BAA-334 / TIGR4).